Here is a 450-residue protein sequence, read N- to C-terminus: Phosphoglucosamine mutase (450 aa).

The Phosphoserine intermediate role is filled by S101. Residues S101, D240, D242, and D244 each coordinate Mg(2+). S101 carries the post-translational modification Phosphoserine.

The protein belongs to the phosphohexose mutase family. It depends on Mg(2+) as a cofactor. In terms of processing, activated by phosphorylation.

It catalyses the reaction alpha-D-glucosamine 1-phosphate = D-glucosamine 6-phosphate. Catalyzes the conversion of glucosamine-6-phosphate to glucosamine-1-phosphate. This chain is Phosphoglucosamine mutase, found in Streptococcus uberis (strain ATCC BAA-854 / 0140J).